Consider the following 81-residue polypeptide: Photosystem I iron-sulfur center (81 aa).

2 consecutive 4Fe-4S ferredoxin-type domains span residues 2–31 and 39–68; these read SHSV…MVSW and IASA…VRVY. Cysteine 11, cysteine 14, cysteine 17, cysteine 21, cysteine 48, cysteine 51, cysteine 54, and cysteine 58 together coordinate [4Fe-4S] cluster.

In terms of assembly, the eukaryotic PSI reaction center is composed of at least 11 subunits. The cofactor is [4Fe-4S] cluster.

It localises to the plastid. It is found in the chloroplast thylakoid membrane. The enzyme catalyses reduced [plastocyanin] + hnu + oxidized [2Fe-2S]-[ferredoxin] = oxidized [plastocyanin] + reduced [2Fe-2S]-[ferredoxin]. In terms of biological role, apoprotein for the two 4Fe-4S centers FA and FB of photosystem I (PSI); essential for photochemical activity. FB is the terminal electron acceptor of PSI, donating electrons to ferredoxin. The C-terminus interacts with PsaA/B/D and helps assemble the protein into the PSI complex. Required for binding of PsaD and PsaE to PSI. PSI is a plastocyanin/cytochrome c6-ferredoxin oxidoreductase, converting photonic excitation into a charge separation, which transfers an electron from the donor P700 chlorophyll pair to the spectroscopically characterized acceptors A0, A1, FX, FA and FB in turn. The chain is Photosystem I iron-sulfur center from Rhodomonas salina (Cryptomonas salina).